The sequence spans 147 residues: Small ribosomal subunit protein uS12 (147 aa).

It belongs to the universal ribosomal protein uS12 family. Part of the 30S ribosomal subunit.

Its function is as follows. With S4 and S5 plays an important role in translational accuracy. Located at the interface of the 30S and 50S subunits. The polypeptide is Small ribosomal subunit protein uS12 (Pyrococcus horikoshii (strain ATCC 700860 / DSM 12428 / JCM 9974 / NBRC 100139 / OT-3)).